Here is a 220-residue protein sequence, read N- to C-terminus: MELNRMIDHTILKPEATEAAVQKIIDEAKEYNFFSVCINPCWVAFASEQLADTDVAVCTVIGFPLGANTPEVKAYEAADAIKNGANEVDMVINIGALKSQQYDYVRQDIQGVVDAAKGKALVKVIIETALLTDEEKVKACELAKEAGADFVKTSTGFSTGGAKVADIRLMRETVGPDMGVKASGGVHNAEEALAMIEAGATRIGASTGVAIVSGATGEGY.

Catalysis depends on D89, which acts as the Proton donor/acceptor. The Schiff-base intermediate with acetaldehyde role is filled by K152. Catalysis depends on K181, which acts as the Proton donor/acceptor.

It belongs to the DeoC/FbaB aldolase family. DeoC type 1 subfamily.

The protein localises to the cytoplasm. It carries out the reaction 2-deoxy-D-ribose 5-phosphate = D-glyceraldehyde 3-phosphate + acetaldehyde. It participates in carbohydrate degradation; 2-deoxy-D-ribose 1-phosphate degradation; D-glyceraldehyde 3-phosphate and acetaldehyde from 2-deoxy-alpha-D-ribose 1-phosphate: step 2/2. Its function is as follows. Catalyzes a reversible aldol reaction between acetaldehyde and D-glyceraldehyde 3-phosphate to generate 2-deoxy-D-ribose 5-phosphate. The chain is Deoxyribose-phosphate aldolase from Enterococcus faecalis (strain ATCC 700802 / V583).